Reading from the N-terminus, the 410-residue chain is MAREKFERSKPHVNIGTIGHVDHGKTTLTAAITMAMSVFSGAGAGKKYDEIDSAPEEKARGITINTAHVEYETENRHYAHVDCPGHADYVKNMITGAAQMDGAILVVSGADGPMPQTKEHLLLAKQVGVPKIVVFLNKKDQVDDDELLELVELEVRETLDNYEFDGDDIPIIPGSALLALEALIESPEAKKGDNEWVDCIYSLMENVDSYIPTPERDTDKPFLMAVEDVFSITGRGTVATGRVERGVVKIGDTVELVGLKDTTETTVTGLEMFQKTLDESVAGDNVGILLRGVQKENIQRGMVLAKPGSISPHTKFEAQVYVLTKEEGGRHTPFFPGYRPQFYVRTTDVTGKIESFVADDGSASQMVMPGDRVKMLVELINPIAVEKGMRFAIREGGRTVGAGVVSEILA.

The tr-type G domain maps to 10–215 (KPHVNIGTIG…NVDSYIPTPE (206 aa)). Positions 19-26 (GHVDHGKT) are G1. Position 19–26 (19–26 (GHVDHGKT)) interacts with GTP. T26 serves as a coordination point for Mg(2+). The G2 stretch occupies residues 61 to 65 (GITIN). The tract at residues 82-85 (DCPG) is G3. GTP contacts are provided by residues 82–86 (DCPGH) and 137–140 (NKKD). The G4 stretch occupies residues 137–140 (NKKD). Residues 175 to 177 (SAL) form a G5 region.

This sequence belongs to the TRAFAC class translation factor GTPase superfamily. Classic translation factor GTPase family. EF-Tu/EF-1A subfamily.

It is found in the plastid. The protein resides in the chloroplast. The catalysed reaction is GTP + H2O = GDP + phosphate + H(+). Its function is as follows. GTP hydrolase that promotes the GTP-dependent binding of aminoacyl-tRNA to the A-site of ribosomes during protein biosynthesis. The polypeptide is Elongation factor Tu, chloroplastic (tufA) (Oltmannsiellopsis viridis (Marine flagellate)).